The sequence spans 296 residues: NAD kinase (296 aa).

The active-site Proton acceptor is Asp73. Residues 73–74, Lys78, 151–152, Arg178, Asp180, and 191–196 each bind NAD(+); these read DG, NE, and TAHAMS.

This sequence belongs to the NAD kinase family. It depends on a divalent metal cation as a cofactor.

It localises to the cytoplasm. It catalyses the reaction NAD(+) + ATP = ADP + NADP(+) + H(+). Its function is as follows. Involved in the regulation of the intracellular balance of NAD and NADP, and is a key enzyme in the biosynthesis of NADP. Catalyzes specifically the phosphorylation on 2'-hydroxyl of the adenosine moiety of NAD to yield NADP. The chain is NAD kinase from Francisella tularensis subsp. tularensis (strain WY96-3418).